Reading from the N-terminus, the 341-residue chain is Spindolin (341 aa).

Positions 1–20 (MNKLILISLIASLYQVEVDA) are cleaved as a signal peptide.

As to quaternary structure, homodimer; disulfide-linked.

In terms of biological role, this protein is a spindle body protein. The protein is Spindolin (SPH) of Choristoneura biennis entomopoxvirus (CbEPV).